The chain runs to 359 residues: Photosystem II protein D1 2 (359 aa).

3 helical membrane-spanning segments follow: residues 29–46 (YVGW…AATT), 118–133 (HFLI…EWEL), and 142–156 (WICV…AASA). His-118 contacts chlorophyll a. Residue Tyr-126 coordinates pheophytin a. [CaMn4O5] cluster-binding residues include Asp-170 and Glu-189. Residues 197 to 218 (FHMLGVAGVFGGSLFSAMHGSL) traverse the membrane as a helical segment. Chlorophyll a is bound at residue His-198. A quinone-binding positions include His-215 and 264 to 265 (SF). A Fe cation-binding site is contributed by His-215. Position 272 (His-272) interacts with Fe cation. Residues 274-288 (FLAAWPVVGIWFTAL) traverse the membrane as a helical segment. Residues His-332, Glu-333, Asp-342, and Ala-344 each coordinate [CaMn4O5] cluster. A propeptide spanning residues 345 to 359 (AAESTPVALQAPAIG) is cleaved from the precursor.

The protein belongs to the reaction center PufL/M/PsbA/D family. In terms of assembly, PSII is composed of 1 copy each of membrane proteins PsbA, PsbB, PsbC, PsbD, PsbE, PsbF, PsbH, PsbI, PsbJ, PsbK, PsbL, PsbM, PsbT, PsbX, PsbY, PsbZ, Psb30/Ycf12, peripheral proteins PsbO, CyanoQ (PsbQ), PsbU, PsbV and a large number of cofactors. It forms dimeric complexes. The D1/D2 heterodimer binds P680, chlorophylls that are the primary electron donor of PSII, and subsequent electron acceptors. It shares a non-heme iron and each subunit binds pheophytin, quinone, additional chlorophylls, carotenoids and lipids. D1 provides most of the ligands for the Mn4-Ca-O5 cluster of the oxygen-evolving complex (OEC). There is also a Cl(-1) ion associated with D1 and D2, which is required for oxygen evolution. The PSII complex binds additional chlorophylls, carotenoids and specific lipids. serves as cofactor. Tyr-161 forms a radical intermediate that is referred to as redox-active TyrZ, YZ or Y-Z. Post-translationally, C-terminally processed by CtpA; processing is essential to allow assembly of the oxygen-evolving complex and thus photosynthetic growth.

It localises to the cellular thylakoid membrane. It carries out the reaction 2 a plastoquinone + 4 hnu + 2 H2O = 2 a plastoquinol + O2. Functionally, photosystem II (PSII) is a light-driven water:plastoquinone oxidoreductase that uses light energy to abstract electrons from H(2)O, generating O(2) and a proton gradient subsequently used for ATP formation. It consists of a core antenna complex that captures photons, and an electron transfer chain that converts photonic excitation into a charge separation. The D1/D2 (PsbA/PsbD) reaction center heterodimer binds P680, the primary electron donor of PSII as well as several subsequent electron acceptors. The polypeptide is Photosystem II protein D1 2 (Synechococcus sp. (strain CC9311)).